Here is a 328-residue protein sequence, read N- to C-terminus: DNA polymerase III subunit delta' (328 aa).

As to quaternary structure, DNA polymerase III contains a core (composed of alpha, epsilon and theta chains) that associates with a tau subunit. This core dimerizes to form the POLIII' complex. PolIII' associates with the gamma complex (composed of gamma, delta, delta', psi and chi chains) and with the beta chain to form the complete DNA polymerase III complex.

The enzyme catalyses DNA(n) + a 2'-deoxyribonucleoside 5'-triphosphate = DNA(n+1) + diphosphate. Its function is as follows. DNA polymerase III is a complex, multichain enzyme responsible for most of the replicative synthesis in bacteria. This DNA polymerase also exhibits 3' to 5' exonuclease activity. In Buchnera aphidicola subsp. Schizaphis graminum (strain Sg), this protein is DNA polymerase III subunit delta' (holB).